Consider the following 1184-residue polypeptide: Probable phospholipid-transporting ATPase 12 (1184 aa).

Residues 1 to 75 (MATVSGRRRK…TTKYTLATFL (75 aa)) are Cytoplasmic-facing. The helical transmembrane segment at 76–97 (PKSLFEQFRRVANFYFLVVGIL) threads the bilayer. Residues 98–101 (SFTP) lie on the Extracellular side of the membrane. Residues 102 to 124 (LAPYTAVSAIVPLTFVILATMFK) form a helical membrane-spanning segment. The Cytoplasmic portion of the chain corresponds to 125-306 (EGVEDWRRKQ…SMIERKMDKI (182 aa)). The chain crosses the membrane as a helical span at residues 307–328 (IYLMFLMVFSLAFFGSVLFGIW). The Extracellular portion of the chain corresponds to 329 to 364 (TRDDFQNGVMERWYLKPDDSSIFFDPKRAPMAAIYH). Residues 365–382 (FLTALMLNSYFIPISLYV) traverse the membrane as a helical segment. Residues 383-921 (SIEIVKVLQS…HGHWCYRRIS (539 aa)) lie on the Cytoplasmic side of the membrane. The 4-aspartylphosphate intermediate role is filled by Asp-430. Residues Asp-866 and Asp-870 each coordinate Mg(2+). A helical membrane pass occupies residues 922–941 (KMICYFFYKNITFGFTLFLY). Over 942–955 (EAYTSFSATPAYND) the chain is Extracellular. The helical transmembrane segment at 956–975 (WYLSLYSVFFTSLPVICLGI) threads the bilayer. Over 976 to 1005 (FDQDVSAPFCLKFPVLYQEGVQNLLFSWRR) the chain is Cytoplasmic. Residues 1006–1028 (ILSWMFHGFCSAIIIFFLCKTSL) traverse the membrane as a helical segment. Residues 1029–1041 (ESQAFNHEGKTAG) lie on the Extracellular side of the membrane. Residues 1042–1064 (RDILGGTMYTCVVWVVSLQMVLT) form a helical membrane-spanning segment. The Cytoplasmic segment spans residues 1065–1070 (ISYFTL). The chain crosses the membrane as a helical span at residues 1071-1091 (IQHVVVWGSVVIWYLFLMVYG). Residues 1092-1108 (SLPIRMSTDAYMVFLEA) lie on the Extracellular side of the membrane. A helical membrane pass occupies residues 1109-1133 (LAPAPSYWITTLFVVLSTMMPYFIF). At 1134-1184 (SAIQMRFFPMSHGTVQLLRYEDQCSNSGNFEMGRQGSVRPTLVMRSHQPES) the chain is on the cytoplasmic side.

The protein belongs to the cation transport ATPase (P-type) (TC 3.A.3) family. Type IV subfamily.

It localises to the membrane. The catalysed reaction is ATP + H2O + phospholipidSide 1 = ADP + phosphate + phospholipidSide 2.. Involved in transport of phospholipids. The polypeptide is Probable phospholipid-transporting ATPase 12 (Arabidopsis thaliana (Mouse-ear cress)).